Reading from the N-terminus, the 123-residue chain is PTS system glucitol/sorbitol-specific EIIA component (123 aa).

One can recognise a PTS EIIA type-5 domain in the interval 1–116; that stretch reads MTVIYQTTIT…PDDIAPGSVL (116 aa). The Tele-phosphohistidine intermediate role is filled by His43. Phosphohistidine; by HPr is present on His43.

It is found in the cytoplasm. The phosphoenolpyruvate-dependent sugar phosphotransferase system (sugar PTS), a major carbohydrate active transport system, catalyzes the phosphorylation of incoming sugar substrates concomitantly with their translocation across the cell membrane. The enzyme II complex composed of SrlA, SrlB and SrlE is involved in glucitol/sorbitol transport. This is PTS system glucitol/sorbitol-specific EIIA component (srlB) from Shigella flexneri.